Reading from the N-terminus, the 288-residue chain is Alpha/beta hydrolase domain-containing protein 17B (288 aa).

Catalysis depends on charge relay system residues serine 170, aspartate 235, and histidine 264. Serine 282 bears the Phosphoserine mark.

Belongs to the AB hydrolase superfamily. ABHD17 family. Palmitoylated on cysteine residues located in a cysteine cluster at the N-terminus which promotes membrane localization. Palmitoylation is required for post-synaptic localization and for depalmitoylating activity towards DLG4/PSD95. In terms of tissue distribution, expressed in brain.

The protein resides in the cell membrane. Its subcellular location is the recycling endosome membrane. It localises to the cell projection. It is found in the dendritic spine. The protein localises to the postsynaptic density membrane. It carries out the reaction S-hexadecanoyl-L-cysteinyl-[protein] + H2O = L-cysteinyl-[protein] + hexadecanoate + H(+). In terms of biological role, hydrolyzes fatty acids from S-acylated cysteine residues in proteins. Has depalmitoylating activity towards DLG4/PSD95. Has depalmitoylating activity towards GAP43. Has depalmitoylating activity towards MAP6. Has depalmitoylating activity towards NRAS. The chain is Alpha/beta hydrolase domain-containing protein 17B from Mus musculus (Mouse).